We begin with the raw amino-acid sequence, 338 residues long: Activator of 90 kDa heat shock protein ATPase homolog 1 (338 aa).

Lys-3 carries the post-translational modification N6-acetyllysine. A Glycyl lysine isopeptide (Lys-Gly) (interchain with G-Cter in SUMO1) cross-link involves residue Lys-182. Ser-193 carries the phosphoserine modification. A Glycyl lysine isopeptide (Lys-Gly) (interchain with G-Cter in SUMO2) cross-link involves residue Lys-203. Lys-212 carries the post-translational modification N6-acetyllysine. The residue at position 223 (Tyr-223) is a Phosphotyrosine; by ABL. The residue at position 258 (Ser-258) is a Phosphoserine.

It belongs to the AHA1 family. As to quaternary structure, interacts with HSPCA/HSP90. Interacts (phosphorylated on Tyr-223) with HSP90AA1; the interaction activates HSP90AA1 ATPase activity. Interacts with HSP90AB1. Interacts with GCH1. Interacts with SRPK1. Interacts with FLCN. In terms of assembly, (Microbial infection) Interacts with vesicular stomatitis virus glycoprotein (VSV G) (via cytoplasmic tail). In terms of processing, phosphorylation at Tyr-223 enhances binding to chaperone HSP90AA1. In terms of tissue distribution, expressed in numerous tissues, including brain, heart, skeletal muscle and kidney and, at lower levels, liver and placenta.

It localises to the cytoplasm. It is found in the cytosol. The protein resides in the endoplasmic reticulum. Acts as a co-chaperone of HSP90AA1. Activates the ATPase activity of HSP90AA1 leading to increase in its chaperone activity. Competes with the inhibitory co-chaperone FNIP1 for binding to HSP90AA1, thereby providing a reciprocal regulatory mechanism for chaperoning of client proteins. Competes with the inhibitory co-chaperone TSC1 for binding to HSP90AA1, thereby providing a reciprocal regulatory mechanism for chaperoning of client proteins. This is Activator of 90 kDa heat shock protein ATPase homolog 1 (AHSA1) from Homo sapiens (Human).